We begin with the raw amino-acid sequence, 248 residues long: MATTLSRDQYVYMAKLAEQAERYEEMVQFMEQLVSGATPAGELTVEERNLLSVAYKNVIGSLRAAWRIVSSIEQKEESRKNEEHVSLVKDYRSKVETELSSICSGILRLLDSHLIPSATASESKVFYLKMKGDYHRYLAEFKSGDERKTAAEDTMIAYKAAQDVAVADLAPTHPIRLGLALNFSVFYYEILNSSEKACSMAKQAFEEAIAELDTLGEESYKDSTLIMQLLRDNLTLWTSDMQEQMDEA.

Phosphoserine occurs at positions 70, 112, and 193. Thr214 is modified (phosphothreonine).

Belongs to the 14-3-3 family. Interacts with the isocitrate dehydrogenase IDH3, and malate dehydrogenases MDH1 and MDH2. Interacts with CINV1.

It localises to the nucleus. It is found in the cytoplasm. In terms of biological role, is associated with a DNA binding complex that binds to the G box, a well-characterized cis-acting DNA regulatory element found in plant genes. Involved in the regulation of nutrient metabolism. Negative regulator of freezing tolerance that modulates cold-responsive C-repeat-binding factors (CBF) DREB1A AND DREB1B proteins stability by facilitating their ubiquitin-mediated degradation; this processus is counteracted by B1L. This Arabidopsis thaliana (Mouse-ear cress) protein is 14-3-3-like protein G-BOX factor 14 kappa.